Reading from the N-terminus, the 128-residue chain is Large ribosomal subunit protein bL12 (128 aa).

Belongs to the bacterial ribosomal protein bL12 family. Homodimer. Part of the ribosomal stalk of the 50S ribosomal subunit. Forms a multimeric L10(L12)X complex, where L10 forms an elongated spine to which 2 to 4 L12 dimers bind in a sequential fashion. Binds GTP-bound translation factors.

Forms part of the ribosomal stalk which helps the ribosome interact with GTP-bound translation factors. Is thus essential for accurate translation. The polypeptide is Large ribosomal subunit protein bL12 (Picosynechococcus sp. (strain ATCC 27264 / PCC 7002 / PR-6) (Agmenellum quadruplicatum)).